A 149-amino-acid chain; its full sequence is MTKVKKEECEEVPETPSKSYDELLSYLNPVAKPLAGRKLTKKLYKCVKKAIKQKNIRRGVKEVQKFINKGEKGIVVMAGDTLPIEVYCHIPVMCEDRGIPYSYVPSKSDLGAAAGSKRPTCVILIKPHEDYQEAYDECLEDVQALPLPY.

It belongs to the eukaryotic ribosomal protein eL8 family. Component of the small nucleolar ribonucleoprotein particle containing H/ACA-type snoRNAs (H/ACA snoRNPs). Component of the telomerase holoenzyme complex.

Its subcellular location is the nucleus. The protein resides in the nucleolus. Functionally, required for ribosome biogenesis. Part of a complex which catalyzes pseudouridylation of rRNA. This involves the isomerization of uridine such that the ribose is subsequently attached to C5, instead of the normal N1. Pseudouridine ('psi') residues may serve to stabilize the conformation of rRNAs. The sequence is that of H/ACA ribonucleoprotein complex subunit 2-like protein (nhp2) from Xenopus laevis (African clawed frog).